The primary structure comprises 142 residues: Putative pre-16S rRNA nuclease (142 aa).

Belongs to the YqgF nuclease family.

It is found in the cytoplasm. Functionally, could be a nuclease involved in processing of the 5'-end of pre-16S rRNA. This chain is Putative pre-16S rRNA nuclease, found in Saccharophagus degradans (strain 2-40 / ATCC 43961 / DSM 17024).